The chain runs to 384 residues: Lipoyl synthase 2, chloroplastic (384 aa).

The transit peptide at 1 to 48 directs the protein to the chloroplast; it reads MAAYCSRVYHHHPVSPSTMQGSLARPSIHAGSASLTFRARPNSVSIVR. [4Fe-4S] cluster contacts are provided by cysteine 108, cysteine 113, cysteine 119, cysteine 145, cysteine 149, cysteine 152, and serine 360. Residues 128 to 349 form the Radical SAM core domain; it reads GDGDGIATAT…KEYGESLGFL (222 aa).

The protein belongs to the radical SAM superfamily. Lipoyl synthase family. It depends on [4Fe-4S] cluster as a cofactor.

The protein localises to the plastid. It is found in the chloroplast. It carries out the reaction [[Fe-S] cluster scaffold protein carrying a second [4Fe-4S](2+) cluster] + N(6)-octanoyl-L-lysyl-[protein] + 2 oxidized [2Fe-2S]-[ferredoxin] + 2 S-adenosyl-L-methionine + 4 H(+) = [[Fe-S] cluster scaffold protein] + N(6)-[(R)-dihydrolipoyl]-L-lysyl-[protein] + 4 Fe(3+) + 2 hydrogen sulfide + 2 5'-deoxyadenosine + 2 L-methionine + 2 reduced [2Fe-2S]-[ferredoxin]. Its pathway is protein modification; protein lipoylation via endogenous pathway; protein N(6)-(lipoyl)lysine from octanoyl-[acyl-carrier-protein]: step 2/2. Catalyzes the radical-mediated insertion of two sulfur atoms into the C-6 and C-8 positions of the octanoyl moiety bound to the lipoyl domains of lipoate-dependent enzymes, thereby converting the octanoylated domains into lipoylated derivatives. In Oryza sativa subsp. indica (Rice), this protein is Lipoyl synthase 2, chloroplastic.